A 914-amino-acid chain; its full sequence is WAG22 antigen (914 aa).

In terms of domain architecture, PE spans 1-93 (MSFVIAVPET…GGAYAAAEAA (93 aa)). 2 disordered regions span residues 412–431 (GGSG…AGGA) and 895–914 (AGAG…HGLT). Gly residues predominate over residues 895–904 (AGAGGAGGLV).

It belongs to the mycobacterial PE family. PGRS subfamily.

The protein is WAG22 antigen (wag22) of Mycobacterium bovis (strain ATCC BAA-935 / AF2122/97).